A 462-amino-acid chain; its full sequence is Exodeoxyribonuclease 7 large subunit (462 aa).

The protein belongs to the XseA family. In terms of assembly, heterooligomer composed of large and small subunits.

The protein resides in the cytoplasm. It carries out the reaction Exonucleolytic cleavage in either 5'- to 3'- or 3'- to 5'-direction to yield nucleoside 5'-phosphates.. In terms of biological role, bidirectionally degrades single-stranded DNA into large acid-insoluble oligonucleotides, which are then degraded further into small acid-soluble oligonucleotides. In Proteus mirabilis (strain HI4320), this protein is Exodeoxyribonuclease 7 large subunit.